The primary structure comprises 189 residues: GTPase NRas (189 aa).

GTP-binding positions include 10–18 (GAGGVGKSA) and 29–30 (VD). An Effector region motif is present at residues 32 to 40 (YDPTIEDSY). A GTP-binding site is contributed by 57 to 61 (DTAGQ). Position 89 is a phosphoserine (S89). 116-119 (NKCD) lines the GTP pocket. Positions 166 to 185 (YRMKKLNSSDDGTQGCMGLP) are hypervariable region. K170 is covalently cross-linked (Glycyl lysine isopeptide (Lys-Gly) (interchain with G-Cter in ubiquitin)). Residue C181 is the site of S-palmitoyl cysteine attachment. A lipid anchor (S-farnesyl cysteine) is attached at C186. Positions 187 to 189 (VVM) are cleaved as a propeptide — removed in mature form.

This sequence belongs to the small GTPase superfamily. Ras family. Interacts (active GTP-bound form preferentially) with RGS14. Interacts (active GTP-bound form) with RASSF7. Interacts (active GTP-bound form) with both SHOC2 and PP1c (all isoforms) to form a tertiary complex; SHOC2 and PP1c preferably bind M-Ras/MRAS, but they also bind K-Ras/KRAS, N-Ras/NRAS and H-Ras/HRAS. In terms of processing, palmitoylated by the ZDHHC9-GOLGA7 complex. Depalmitoylated by ABHD17A, ABHD17B and ABHD17C. A continuous cycle of de- and re-palmitoylation regulates rapid exchange between plasma membrane and Golgi. Acetylation at Lys-104 prevents interaction with guanine nucleotide exchange factors (GEFs). Post-translationally, ubiquitinated by the BCR(LZTR1) E3 ubiquitin ligase complex at Lys-170 in a non-degradative manner, leading to inhibit Ras signaling by decreasing Ras association with membranes. In terms of processing, phosphorylation at Ser-89 enhances NRAS association with its downstream effectors.

The protein localises to the cell membrane. It is found in the golgi apparatus membrane. It carries out the reaction GTP + H2O = GDP + phosphate + H(+). With respect to regulation, alternates between an inactive form bound to GDP and an active form bound to GTP. Activated by a guanine nucleotide-exchange factor (GEF) and inactivated by a GTPase-activating protein (GAP). Its function is as follows. Ras proteins bind GDP/GTP and possess intrinsic GTPase activity. The polypeptide is GTPase NRas (NRAS) (Pongo abelii (Sumatran orangutan)).